A 58-amino-acid polypeptide reads, in one-letter code: uncharacterized protein (58 aa).

The protein localises to the plastid. The protein resides in the chloroplast. This is an uncharacterized protein from Porphyra purpurea (Red seaweed).